A 112-amino-acid polypeptide reads, in one-letter code: Large ribosomal subunit protein bL20c (112 aa).

The protein belongs to the bacterial ribosomal protein bL20 family.

The protein localises to the plastid. It localises to the chloroplast. Functionally, binds directly to 23S ribosomal RNA and is necessary for the in vitro assembly process of the 50S ribosomal subunit. It is not involved in the protein synthesizing functions of that subunit. The protein is Large ribosomal subunit protein bL20c (rpl20) of Chlamydomonas reinhardtii (Chlamydomonas smithii).